A 156-amino-acid chain; its full sequence is Small ribosomal subunit protein uS7 (156 aa).

It belongs to the universal ribosomal protein uS7 family. In terms of assembly, part of the 30S ribosomal subunit. Contacts proteins S9 and S11.

One of the primary rRNA binding proteins, it binds directly to 16S rRNA where it nucleates assembly of the head domain of the 30S subunit. Is located at the subunit interface close to the decoding center, probably blocks exit of the E-site tRNA. This Syntrophobacter fumaroxidans (strain DSM 10017 / MPOB) protein is Small ribosomal subunit protein uS7.